The following is a 320-amino-acid chain: MNVQEQQAIRKLLSRIERQTKMKNADNISRTNAYKAFYDRHPEIKWSLLASFVSRNAGWSMTDLKGSLFQLGLRERQQKWFFLAYERANWLIFSDAYPQLLLYHWSKRVGKPLFHLLHVFGVSQFMSEEWTRFWHERNTERLMYALIINEQNTIQTPIIQNPSFKKNVFDTIPFYLSDWFHFNTVIFPSSNGFFYGISVKRFSKAEERIRLGKQLSQLLFKPELFSSFYHFLHTVPHTGSRFDMEKMIGITKRTSPMLRTCYPELIHSLDGTKTDWFHGKIKKTFFRREELPKQIELTDWYLHKKRQLHALFAVEQWLKK.

This is an uncharacterized protein from Bacillus subtilis (strain 168).